We begin with the raw amino-acid sequence, 475 residues long: Protein FIZZY-RELATED 1 (475 aa).

A disordered region spans residues 1 to 27 (MEEDESTTPKKKSDSQLNLPPSMNRPT). Residues 15–27 (SQLNLPPSMNRPT) are compositionally biased toward polar residues. WD repeat units lie at residues 166-203 (QDDF…VTKL), 207-246 (GVDE…NIRT), 249-289 (GHRL…SKLK), 290-329 (GHKS…PVLR), 332-374 (EHAA…HLNC), 376-417 (DTNS…KLAT), and 420-459 (GHSY…KSQS).

This sequence belongs to the WD repeat CDC20/Fizzy family. Associates with the APC/C complex. Interacts with CDC20-1, CDC20-2, CYCA1-1, CYCA1-2, CYCA3-4, CYCB1-1 and CYCB1-2. Binds to GIG1. As to expression, expressed in the root tip, predominantly in the root cap, quiescent center cells, surrounding stem cells and columella.

The protein localises to the nucleus. It functions in the pathway protein modification; protein ubiquitination. Activator protein that regulates the ubiquitin ligase activity and substrate specificity of the anaphase promoting complex/cyclosome (APC/C). Required for meristem organization and maintenance of quiescent center identity and stem cells. This Arabidopsis thaliana (Mouse-ear cress) protein is Protein FIZZY-RELATED 1 (FZR1).